Reading from the N-terminus, the 993-residue chain is Mediator of RNA polymerase II transcription subunit 24 (993 aa).

Phosphoserine is present on residues Ser827 and Ser829.

Belongs to the Mediator complex subunit 24 family. As to quaternary structure, component of the Mediator complex, which includes at least CDK8, MED4, MED6, MED11, MED14, MED17, MED18, MED20, MED21, MED22, MED27, MED28, MED30 and MED31.

Its subcellular location is the nucleus. In terms of biological role, component of the Mediator complex, a coactivator involved in the regulated transcription of nearly all RNA polymerase II-dependent genes. Mediator functions as a bridge to convey information from gene-specific regulatory proteins to the basal RNA polymerase II transcription machinery. Mediator is recruited to promoters by direct interactions with regulatory proteins and serves as a scaffold for the assembly of a functional preinitiation complex with RNA polymerase II and the general transcription factors. Required for activated transcription of the MtnA, MtnB and MtnD genes. The protein is Mediator of RNA polymerase II transcription subunit 24 (MED24) of Drosophila melanogaster (Fruit fly).